The sequence spans 190 residues: Large ribosomal subunit protein bL25 (190 aa).

It belongs to the bacterial ribosomal protein bL25 family. CTC subfamily. Part of the 50S ribosomal subunit; part of the 5S rRNA/L5/L18/L25 subcomplex. Contacts the 5S rRNA. Binds to the 5S rRNA independently of L5 and L18.

Its function is as follows. This is one of the proteins that binds to the 5S RNA in the ribosome where it forms part of the central protuberance. This chain is Large ribosomal subunit protein bL25, found in Neisseria gonorrhoeae (strain ATCC 700825 / FA 1090).